A 406-amino-acid polypeptide reads, in one-letter code: Elongation factor Tu-A (406 aa).

In terms of domain architecture, tr-type G spans lysine 10–valine 215. The interval glycine 19–threonine 26 is G1. A GTP-binding site is contributed by glycine 19 to threonine 26. Threonine 26 provides a ligand contact to Mg(2+). The segment at glycine 61–asparagine 65 is G2. A G3 region spans residues aspartate 82 to glycine 85. GTP-binding positions include aspartate 82–histidine 86 and asparagine 137–aspartate 140. The interval asparagine 137–aspartate 140 is G4. The segment at serine 175 to leucine 177 is G5. Threonine 395 bears the Phosphothreonine mark.

This sequence belongs to the TRAFAC class translation factor GTPase superfamily. Classic translation factor GTPase family. EF-Tu/EF-1A subfamily. Monomer. Binds to the 70S ribosome, contacts tmRNA during trans-translation. In terms of processing, phosphorylated on a threonine.

The protein resides in the cytoplasm. The catalysed reaction is GTP + H2O = GDP + phosphate + H(+). Functionally, GTP hydrolase that promotes the GTP-dependent binding of aminoacyl-tRNA to the A-site of ribosomes during protein biosynthesis. Its function is as follows. EF-Tu-GDP binds to the acceptor arm of tmRNA by interacting with its acceptor arm, suggesting that GTP hydrolysis by EF-Tu is essential for tmRNA function. Protects glycyl-tRNA(Gly) from hydrolysis by E.coli D-aminoacyl-tRNA deacylase (dtd). This is Elongation factor Tu-A from Thermus thermophilus (strain ATCC 27634 / DSM 579 / HB8).